A 380-amino-acid chain; its full sequence is MNNTLKYWKEAATLIVAARTSHGHFPYIQPQVQFPNQQNNTSDYEVLLLKRSQKSGFMPNAFVFPGGNIESSDFSSDWIKVFSRYEQKPNFGLGLVKQLDNRSPMFTADSSKFGSLIPGEVATRICAIRETFEESGILLVVPENFNSEDNQHLVEVTDQDKEKLSKWREEVQRNPSQFIQMCKEMRCMPNIWALKEWSNWLTPVISQGVKSRRFDTAFFICCLNAKPAVSDDNKEVTSFKWWTPTEALEDYKSHKIWIPPPQFYELSRLCHFAPINELHKFIVNRSLEGCERWMPVIAQCEDGIVHTLPGDDLYPEDPDLTGEKQTVVCSNETIENLIQKGGRFHRLVLIDGKPTLLVNIKPKYKHINPLTIESESKNKL.

In terms of domain architecture, Nudix hydrolase spans 8-264 (WKEAATLIVA…KIWIPPPQFY (257 aa)). A Nudix box motif is present at residues 115–136 (SLIPGEVATRICAIRETFEESG). Mg(2+) is bound by residues Glu130 and Glu134. Positions 378–380 (NKL) match the Microbody targeting signal motif.

This sequence belongs to the Nudix hydrolase family. As to quaternary structure, monomer. The cofactor is Mg(2+). Requires Mn(2+) as cofactor.

Its subcellular location is the peroxisome. It carries out the reaction an acyl-CoA + H2O = an acyl-4'-phosphopantetheine + adenosine 3',5'-bisphosphate + 2 H(+). The enzyme catalyses CoA + H2O = (R)-4'-phosphopantetheine + adenosine 3',5'-bisphosphate + 2 H(+). The catalysed reaction is hexanoyl-CoA + H2O = hexanoyl-4'-phosphopantetheine + adenosine 3',5'-bisphosphate + 2 H(+). It catalyses the reaction octanoyl-CoA + H2O = S-octanoyl-4'-phosphopantetheine + adenosine 3',5'-bisphosphate + 2 H(+). It carries out the reaction butanoyl-CoA + H2O = S-butanoyl-4'-phosphopantetheine + adenosine 3',5'-bisphosphate + 2 H(+). The enzyme catalyses propanoyl-CoA + H2O = propanoyl-4'-phosphopantetheine + adenosine 3',5'-bisphosphate + 2 H(+). The catalysed reaction is malonyl-CoA + H2O = malonyl-4'-phosphopantetheine + adenosine 3',5'-bisphosphate + 2 H(+). It catalyses the reaction succinyl-CoA + H2O = succinyl-4'-phosphopantetheine + adenosine 3',5'-bisphosphate + 2 H(+). It carries out the reaction choloyl-CoA + H2O = S-choloyl-4'-phosphopantetheine + adenosine 3',5'-bisphosphate + 2 H(+). The enzyme catalyses 4,8-dimethylnonanoyl-CoA + H2O = S-(4,8-dimethylnonanoyl)-4'-phosphopantetheine + adenosine 3',5'-bisphosphate + 2 H(+). The catalysed reaction is (9Z,12Z,15Z)-octadecatrienoyl-CoA + H2O = S-(9Z,12Z,15Z-octadecatrienoyl)-4'-phosphopantetheine + adenosine 3',5'-bisphosphate + 2 H(+). It catalyses the reaction (9Z,12Z)-octadecadienoyl-CoA + H2O = S-(9Z,12Z-octadecadienoyl)-4'-phosphopantetheine + adenosine 3',5'-bisphosphate + 2 H(+). It carries out the reaction (9Z)-hexadecenoyl-CoA + H2O = S-(9Z-hexadecenoyl)-4'-phosphopantetheine + adenosine 3',5'-bisphosphate + 2 H(+). The enzyme catalyses (9Z)-tetradecenoyl-CoA + H2O = S-(9Z-tetradecenoyl)-4'-phosphopantetheine + adenosine 3',5'-bisphosphate + 2 H(+). The catalysed reaction is (6Z)-octenoyl-CoA + H2O = S-(6Z-octenoyl)-4'-phosphopantetheine + adenosine 3',5'-bisphosphate + 2 H(+). It catalyses the reaction hexadecanoyl-CoA + H2O = S-hexadecanoyl-4'-phosphopantetheine + adenosine 3',5'-bisphosphate + 2 H(+). It carries out the reaction tetradecanoyl-CoA + H2O = tetradecanoyl-4'-phosphopantetheine + adenosine 3',5'-bisphosphate + 2 H(+). The enzyme catalyses dodecanoyl-CoA + H2O = S-dodecanoyl-4'-phosphopantetheine + adenosine 3',5'-bisphosphate + 2 H(+). The catalysed reaction is a 5'-end CoA-ribonucleoside in mRNA + H2O = a 5'-end phospho-adenosine-phospho-ribonucleoside in mRNA + (R)-4'-phosphopantetheine + 2 H(+). Functionally, fatty acyl-coenzyme A (CoA) diphosphatase that hydrolyzes fatty acyl-CoA to yield acyl-4'-phosphopantetheine and adenosine 3',5'-bisphosphate. Mediates the hydrolysis of a wide range of CoA esters, including choloyl-CoA and branched-chain fatty-acyl-CoA esters and at low substrate concentrations medium and long-chain fatty-acyl-CoA esters are the primary substrates. Highest activity seen with medium-chain acyl-CoA esters and higher rates of activity seen with the unsaturated acyl-CoA esters compared with the saturated esters. Exhibits decapping activity towards dpCoA-capped RNAs in vitro. The protein is Acyl-coenzyme A diphosphatase NUDT19 (nudt19) of Xenopus laevis (African clawed frog).